We begin with the raw amino-acid sequence, 510 residues long: 2-isopropylmalate synthase (510 aa).

In terms of domain architecture, Pyruvate carboxyltransferase spans Leu-5 to Val-267. 4 residues coordinate Mn(2+): Asp-14, His-202, His-204, and Asn-238. The tract at residues Arg-392–Ile-510 is regulatory domain.

Belongs to the alpha-IPM synthase/homocitrate synthase family. LeuA type 1 subfamily. In terms of assembly, homodimer. Mn(2+) serves as cofactor.

It localises to the cytoplasm. It carries out the reaction 3-methyl-2-oxobutanoate + acetyl-CoA + H2O = (2S)-2-isopropylmalate + CoA + H(+). It participates in amino-acid biosynthesis; L-leucine biosynthesis; L-leucine from 3-methyl-2-oxobutanoate: step 1/4. Its function is as follows. Catalyzes the condensation of the acetyl group of acetyl-CoA with 3-methyl-2-oxobutanoate (2-ketoisovalerate) to form 3-carboxy-3-hydroxy-4-methylpentanoate (2-isopropylmalate). The sequence is that of 2-isopropylmalate synthase from Nitrosomonas europaea (strain ATCC 19718 / CIP 103999 / KCTC 2705 / NBRC 14298).